The primary structure comprises 171 residues: UPF0312 protein SE_0264 (171 aa).

It belongs to the UPF0312 family.

This chain is UPF0312 protein SE_0264, found in Staphylococcus epidermidis (strain ATCC 12228 / FDA PCI 1200).